We begin with the raw amino-acid sequence, 374 residues long: Histidinol-phosphate aminotransferase (374 aa).

K215 carries the N6-(pyridoxal phosphate)lysine modification.

It belongs to the class-II pyridoxal-phosphate-dependent aminotransferase family. Histidinol-phosphate aminotransferase subfamily. In terms of assembly, homodimer. Pyridoxal 5'-phosphate serves as cofactor.

It catalyses the reaction L-histidinol phosphate + 2-oxoglutarate = 3-(imidazol-4-yl)-2-oxopropyl phosphate + L-glutamate. It participates in amino-acid biosynthesis; L-histidine biosynthesis; L-histidine from 5-phospho-alpha-D-ribose 1-diphosphate: step 7/9. This Yersinia enterocolitica serotype O:8 / biotype 1B (strain NCTC 13174 / 8081) protein is Histidinol-phosphate aminotransferase.